The following is a 440-amino-acid chain: Ribulose bisphosphate carboxylase large chain (440 aa).

An N6,N6,N6-trimethyllysine modification is found at K4. The substrate site is built by N113 and T163. K165 functions as the Proton acceptor in the catalytic mechanism. K167 contributes to the substrate binding site. K191, D193, and E194 together coordinate Mg(2+). At K191 the chain carries N6-carboxylysine. Catalysis depends on H284, which acts as the Proton acceptor. Residues R285, H317, and S369 each contribute to the substrate site.

This sequence belongs to the RuBisCO large chain family. Type I subfamily. Heterohexadecamer of 8 large chains and 8 small chains; disulfide-linked. The disulfide link is formed within the large subunit homodimers. Mg(2+) is required as a cofactor. In terms of processing, the disulfide bond which can form in the large chain dimeric partners within the hexadecamer appears to be associated with oxidative stress and protein turnover.

It is found in the plastid. Its subcellular location is the chloroplast. It catalyses the reaction 2 (2R)-3-phosphoglycerate + 2 H(+) = D-ribulose 1,5-bisphosphate + CO2 + H2O. The catalysed reaction is D-ribulose 1,5-bisphosphate + O2 = 2-phosphoglycolate + (2R)-3-phosphoglycerate + 2 H(+). In terms of biological role, ruBisCO catalyzes two reactions: the carboxylation of D-ribulose 1,5-bisphosphate, the primary event in carbon dioxide fixation, as well as the oxidative fragmentation of the pentose substrate in the photorespiration process. Both reactions occur simultaneously and in competition at the same active site. This Pteris vittata (Chinese ladder brake) protein is Ribulose bisphosphate carboxylase large chain.